A 195-amino-acid polypeptide reads, in one-letter code: DnaJ homolog subfamily C member 5 (195 aa).

One can recognise a J domain in the interval 13 to 82 (GDSLYIVLGL…RNIYDKYGSL (70 aa)). The tract at residues 162–195 (DMEKEGDGAIVVQPTSATETTQLTSDSHPSYHTE) is disordered. Residues 174–189 (QPTSATETTQLTSDSH) show a composition bias toward polar residues.

Post-translationally, palmitoylated. Palmitoylation occurs probably in the cysteine-rich domain and regulates DNAJC5 stable membrane attachment.

It localises to the cytoplasm. Its subcellular location is the cytosol. The protein resides in the membrane. The protein localises to the cytoplasmic vesicle. It is found in the secretory vesicle. It localises to the chromaffin granule membrane. Its subcellular location is the melanosome. The protein resides in the cell membrane. Functionally, may have an important role in presynaptic function. May be involved in calcium-dependent neurotransmitter release at nerve endings. The polypeptide is DnaJ homolog subfamily C member 5 (Tetronarce californica (Pacific electric ray)).